The chain runs to 441 residues: 3-phosphoshikimate 1-carboxyvinyltransferase (441 aa).

3-phosphoshikimate is bound by residues lysine 22, serine 23, and arginine 27. A phosphoenolpyruvate-binding site is contributed by lysine 22. Phosphoenolpyruvate contacts are provided by glycine 95 and arginine 123. Serine 168, glutamine 170, aspartate 321, and lysine 348 together coordinate 3-phosphoshikimate. Glutamine 170 is a binding site for phosphoenolpyruvate. Residue aspartate 321 is the Proton acceptor of the active site. Residues arginine 352 and arginine 400 each contribute to the phosphoenolpyruvate site.

Belongs to the EPSP synthase family. As to quaternary structure, monomer.

It localises to the cytoplasm. The catalysed reaction is 3-phosphoshikimate + phosphoenolpyruvate = 5-O-(1-carboxyvinyl)-3-phosphoshikimate + phosphate. It functions in the pathway metabolic intermediate biosynthesis; chorismate biosynthesis; chorismate from D-erythrose 4-phosphate and phosphoenolpyruvate: step 6/7. Catalyzes the transfer of the enolpyruvyl moiety of phosphoenolpyruvate (PEP) to the 5-hydroxyl of shikimate-3-phosphate (S3P) to produce enolpyruvyl shikimate-3-phosphate and inorganic phosphate. The chain is 3-phosphoshikimate 1-carboxyvinyltransferase from Novosphingobium aromaticivorans (strain ATCC 700278 / DSM 12444 / CCUG 56034 / CIP 105152 / NBRC 16084 / F199).